We begin with the raw amino-acid sequence, 464 residues long: tRNA-2-methylthio-N(6)-dimethylallyladenosine synthase (464 aa).

One can recognise an MTTase N-terminal domain in the interval 4-119 (RTFHIMTFGC…APQAIERLVQ (116 aa)). Positions 13, 48, 82, 158, 162, and 165 each coordinate [4Fe-4S] cluster. One can recognise a Radical SAM core domain in the interval 144–375 (GEVPVSAYVN…QEVQNEYSEA (232 aa)). Residues 378-461 (QAMVGKTVMV…KHSLTGEPAG (84 aa)) enclose the TRAM domain. The interval 393 to 420 (SPKSAAGSGTDAQNAAEESGRTASSWQG) is disordered.

The protein belongs to the methylthiotransferase family. MiaB subfamily. Monomer. The cofactor is [4Fe-4S] cluster.

It is found in the cytoplasm. It catalyses the reaction N(6)-dimethylallyladenosine(37) in tRNA + (sulfur carrier)-SH + AH2 + 2 S-adenosyl-L-methionine = 2-methylsulfanyl-N(6)-dimethylallyladenosine(37) in tRNA + (sulfur carrier)-H + 5'-deoxyadenosine + L-methionine + A + S-adenosyl-L-homocysteine + 2 H(+). Functionally, catalyzes the methylthiolation of N6-(dimethylallyl)adenosine (i(6)A), leading to the formation of 2-methylthio-N6-(dimethylallyl)adenosine (ms(2)i(6)A) at position 37 in tRNAs that read codons beginning with uridine. The polypeptide is tRNA-2-methylthio-N(6)-dimethylallyladenosine synthase (Oleidesulfovibrio alaskensis (strain ATCC BAA-1058 / DSM 17464 / G20) (Desulfovibrio alaskensis)).